Consider the following 184-residue polypeptide: Ethylene-responsive transcription factor ERF024 (184 aa).

The disordered stretch occupies residues 1-21 (MQGTSKDNGGRHPLYRGVRQR). The AP2/ERF DNA-binding region spans 14–72 (LYRGVRQRKNSNKWVSEIREPRKPNRIWLGTFSTPEMAAIAYDVAALALKGSQAELNFP).

Belongs to the AP2/ERF transcription factor family. ERF subfamily.

It is found in the nucleus. Functionally, probably acts as a transcriptional activator. Binds to the GCC-box pathogenesis-related promoter element. May be involved in the regulation of gene expression by stress factors and by components of stress signal transduction pathways. The chain is Ethylene-responsive transcription factor ERF024 (ERF024) from Arabidopsis thaliana (Mouse-ear cress).